The following is a 365-amino-acid chain: Cytochrome P450 71A3 (365 aa).

Belongs to the cytochrome P450 family. Requires heme as cofactor.

May have a role in maturation, such as during flavor formation or other metabolite production specific to aging tissues. The polypeptide is Cytochrome P450 71A3 (CYP71A3) (Solanum melongena (Eggplant)).